The chain runs to 146 residues: Leghemoglobin Lb120-29 (146 aa).

The Globin domain occupies 2-146; it reads GFTDKQEALV…LASAIKKAMS (145 aa). Nitrated tyrosine is present on residues tyrosine 24 and tyrosine 29. Residue serine 44 coordinates heme b. Residue serine 44 is modified to Phosphoserine. Position 61 (histidine 61) interacts with O2. Heme b-binding residues include lysine 64, histidine 93, and lysine 96. At tyrosine 134 the chain carries Nitrated tyrosine.

This sequence belongs to the plant globin family. In terms of assembly, monomer. Post-translationally, nitrated in effective nodules and particularly in hypoxic conditions; this mechanism may play a protective role in the symbiosis by buffering toxic peroxynitrite NO(2)(-). Nitration level decrease during nodule senescence. Phosphorylation at Ser-44 disrupts the molecular environment of its porphyrin ring oxygen binding pocket, thus leading to a reduced oxygen consumption and to the delivery of oxygen O(2) to symbiosomes. As to expression, root nodules.

It localises to the cytoplasm. Its subcellular location is the cytosol. The protein resides in the nucleus. Its function is as follows. Leghemoglobin that reversibly binds oxygen O(2) through a pentacoordinated heme iron. In root nodules, facilitates the diffusion of oxygen to the bacteroids while preventing the bacterial nitrogenase from being inactivated by buffering dioxygen, nitric oxide and carbon monoxide, and promoting the formation of reactive oxygen species (ROS, e.g. H(2)O(2)). This role is essential for symbiotic nitrogen fixation (SNF). In Pisum sativum (Garden pea), this protein is Leghemoglobin Lb120-29.